Consider the following 103-residue polypeptide: Small ribosomal subunit protein uS10 (103 aa).

Belongs to the universal ribosomal protein uS10 family. As to quaternary structure, part of the 30S ribosomal subunit.

Functionally, involved in the binding of tRNA to the ribosomes. The polypeptide is Small ribosomal subunit protein uS10 (Xanthomonas campestris pv. campestris (strain B100)).